The following is a 565-amino-acid chain: MKATQTLIATTKELPKEAVLISHQYMLKAGLIKKLASGIYTWMPLGLKVLQKIQNIVRDEMNKAGASELLLPSILPSELLQETHRWDKFGPELLKLHDRHNRDFCYGPTHEEPIVDMARDTIKSYKQLPLNLYQIQTKFRDEIRPRFGVMRAREFIMKDAYSFHENSQCLRNTYNTMYATYCNILDKIGLAYRPVKADTGAIGGDNSHEFQVLANAGEDIICYSNGSDYAANIELATYAKSDLSKRVNSQNTIEKIHTPNIKTIEKLCKEMSFDIKKTIKTMVIKDAGGNFFALVIRGDHELNETKINKLDQIIAPYTLATKEEIFSIFNANPGSLGIYNCPISIIADYSAIAITDLVCGANEDDYHFTNVNWDRDVTNYQIADIRNVVTGDISPDGKGTLELTNGIEVGHIFELEDVYSKPMNANIIGQDGKSKPMLMGCYGFGVSRVMAAAIEQSHDENGIIWPESIAPYQVAILPINYNKSDKIKEVADKLYQDLLGDGIDVLLDDRGARPGVMFADADLIGYSHHVVIGDRLLEQGLIEYKNRKTQEKQEITIAELIKILK.

It belongs to the class-II aminoacyl-tRNA synthetase family. ProS type 1 subfamily. Homodimer.

It is found in the cytoplasm. It carries out the reaction tRNA(Pro) + L-proline + ATP = L-prolyl-tRNA(Pro) + AMP + diphosphate. Its function is as follows. Catalyzes the attachment of proline to tRNA(Pro) in a two-step reaction: proline is first activated by ATP to form Pro-AMP and then transferred to the acceptor end of tRNA(Pro). As ProRS can inadvertently accommodate and process non-cognate amino acids such as alanine and cysteine, to avoid such errors it has two additional distinct editing activities against alanine. One activity is designated as 'pretransfer' editing and involves the tRNA(Pro)-independent hydrolysis of activated Ala-AMP. The other activity is designated 'posttransfer' editing and involves deacylation of mischarged Ala-tRNA(Pro). The misacylated Cys-tRNA(Pro) is not edited by ProRS. In Francisella tularensis subsp. tularensis (strain FSC 198), this protein is Proline--tRNA ligase.